Reading from the N-terminus, the 75-residue chain is MDNHRRTKQPKTNSIVTSSSEEVSSLEWEVVNMSQEEEDLVSRMHKLVGDRWELIAGRIPGRTAGEIERFWVMKN.

The disordered stretch occupies residues 1–20 (MDNHRRTKQPKTNSIVTSSS). The region spanning 34-71 (SQEEEDLVSRMHKLVGDRWELIAGRIPGRTAGEIERFW) is the Myb-like domain.

In terms of tissue distribution, expressed in leaf epidermal cells, stomate guard cells in leaves, cotyledons and hypocotyls, inflorescences, developing seeds and siliques.

The protein resides in the nucleus. Its function is as follows. MYB-type transcription factor involved in epidermal cell fate specification. Acts as a negative regulator of trichome development, including endoreplication, by mediating lateral inhibition. Promotes the formation of hair developing cells in H position in root epidermis, probably by inhibiting non-hair cell formation. May have pleiotropic effects on flowering development and epidermal cell size through the regulation of endoreduplication. The protein is MYB-like transcription factor ETC3 (ETC3) of Arabidopsis thaliana (Mouse-ear cress).